The sequence spans 338 residues: D-erythrose-4-phosphate dehydrogenase (338 aa).

NAD(+) is bound at residue 12–13 (RI). Substrate contacts are provided by residues 154–156 (SCT), arginine 200, 213–214 (TK), and arginine 236. The active-site Nucleophile is cysteine 155. Residue asparagine 318 coordinates NAD(+).

This sequence belongs to the glyceraldehyde-3-phosphate dehydrogenase family. Epd subfamily. In terms of assembly, homotetramer.

It is found in the cytoplasm. It catalyses the reaction D-erythrose 4-phosphate + NAD(+) + H2O = 4-phospho-D-erythronate + NADH + 2 H(+). Its pathway is cofactor biosynthesis; pyridoxine 5'-phosphate biosynthesis; pyridoxine 5'-phosphate from D-erythrose 4-phosphate: step 1/5. Catalyzes the NAD-dependent conversion of D-erythrose 4-phosphate to 4-phosphoerythronate. The chain is D-erythrose-4-phosphate dehydrogenase from Pectobacterium carotovorum subsp. carotovorum (strain PC1).